The primary structure comprises 460 residues: Bifunctional protein GlmU (460 aa).

The interval 1-232 is pyrophosphorylase; that stretch reads MALNVVILAA…AIEVEGANNR (232 aa). Residues 8–11, Lys22, Gln73, 78–79, 100–102, Gly137, Glu157, Asn172, and Asn230 each bind UDP-N-acetyl-alpha-D-glucosamine; these read LAAG, GT, and YGD. A Mg(2+)-binding site is contributed by Asp102. Position 230 (Asn230) interacts with Mg(2+). Positions 233–253 are linker; the sequence is VQLAQLERAYQAREAEKLMLA. Residues 254–460 are N-acetyltransferase; that stretch reads GANLRDPSRI…GWQRPVKIKK (207 aa). UDP-N-acetyl-alpha-D-glucosamine is bound by residues Arg336 and Lys354. The Proton acceptor role is filled by His366. The UDP-N-acetyl-alpha-D-glucosamine site is built by Tyr369 and Asn380. Acetyl-CoA is bound by residues Ala383, 389 to 390, Ser408, Ala426, and Arg443; that span reads NY.

In the N-terminal section; belongs to the N-acetylglucosamine-1-phosphate uridyltransferase family. This sequence in the C-terminal section; belongs to the transferase hexapeptide repeat family. Homotrimer. Mg(2+) serves as cofactor.

It localises to the cytoplasm. The catalysed reaction is alpha-D-glucosamine 1-phosphate + acetyl-CoA = N-acetyl-alpha-D-glucosamine 1-phosphate + CoA + H(+). It catalyses the reaction N-acetyl-alpha-D-glucosamine 1-phosphate + UTP + H(+) = UDP-N-acetyl-alpha-D-glucosamine + diphosphate. The protein operates within nucleotide-sugar biosynthesis; UDP-N-acetyl-alpha-D-glucosamine biosynthesis; N-acetyl-alpha-D-glucosamine 1-phosphate from alpha-D-glucosamine 6-phosphate (route II): step 2/2. It functions in the pathway nucleotide-sugar biosynthesis; UDP-N-acetyl-alpha-D-glucosamine biosynthesis; UDP-N-acetyl-alpha-D-glucosamine from N-acetyl-alpha-D-glucosamine 1-phosphate: step 1/1. Its pathway is bacterial outer membrane biogenesis; LPS lipid A biosynthesis. Functionally, catalyzes the last two sequential reactions in the de novo biosynthetic pathway for UDP-N-acetylglucosamine (UDP-GlcNAc). The C-terminal domain catalyzes the transfer of acetyl group from acetyl coenzyme A to glucosamine-1-phosphate (GlcN-1-P) to produce N-acetylglucosamine-1-phosphate (GlcNAc-1-P), which is converted into UDP-GlcNAc by the transfer of uridine 5-monophosphate (from uridine 5-triphosphate), a reaction catalyzed by the N-terminal domain. The polypeptide is Bifunctional protein GlmU (Shewanella baltica (strain OS223)).